A 211-amino-acid polypeptide reads, in one-letter code: Small ribosomal subunit protein bS6c alpha (211 aa).

Over residues 1 to 19 (MATFSLTSTLPSSSPTTSL) the composition is skewed to low complexity. Disordered regions lie at residues 1-25 (MATF…IPKP) and 80-100 (DEDP…PEPQ). The N-terminal 65 residues, 1 to 65 (MATFSLTSTL…YGPYVKAIAL (65 aa)), are a transit peptide targeting the chloroplast.

It belongs to the bacterial ribosomal protein bS6 family. In terms of assembly, component of the chloroplast small ribosomal subunit (SSU). Mature 70S chloroplast ribosomes of higher plants consist of a small (30S) and a large (50S) subunit. The 30S small subunit contains 1 molecule of ribosomal RNA (16S rRNA) and 24 different proteins. The 50S large subunit contains 3 rRNA molecules (23S, 5S and 4.5S rRNA) and 33 different proteins.

It localises to the plastid. Its subcellular location is the chloroplast. Functionally, component of the chloroplast ribosome (chloro-ribosome), a dedicated translation machinery responsible for the synthesis of chloroplast genome-encoded proteins, including proteins of the transcription and translation machinery and components of the photosynthetic apparatus. The sequence is that of Small ribosomal subunit protein bS6c alpha (RPS6) from Spinacia oleracea (Spinach).